Consider the following 716-residue polypeptide: Cytoplasmic polyadenylation element-binding protein 3 (716 aa).

Residues 1–11 show a composition bias toward basic and acidic residues; sequence MQDDLLMDKSK. Disordered regions lie at residues 1-118 and 162-209; these read MQDD…WSTG and AQTQ…RSAA. Composition is skewed to low complexity over residues 13-31 and 54-63; these read QPQS…QQLQ and SSAVPALSPA. Over residues 91–100 the composition is skewed to pro residues; the sequence is PQQPPPPQEP. Positions 107 to 118 are enriched in polar residues; it reads LSPSFGSTWSTG. The segment covering 169-186 has biased composition (pro residues); sequence QPPPPAPQPPQPAQPPQA. The span at 187–209 shows a compositional bias: low complexity; the sequence is QPSQQRRSPASPSQAPYAQRSAA. Residues Ser194, Ser197, and Ser291 each carry the phosphoserine modification. Position 309 is an asymmetric dimethylarginine (Arg309). A phosphoserine mark is found at Ser419 and Ser420. 2 RRM domains span residues 459 to 550 and 567 to 649; these read RKVF…PWNL and KTIF…PYVL.

The protein belongs to the RRM CPEB family. Following synaptic activity, aggregates to form amyloid-like oligomers. Aggregation requires an intact actin cytoskeleton. Interacts with STAT5B; this inhibits STAT5B-mediated transcriptional activation. Interacts with E3 ubiquitin-protein ligase NEURL1; this leads to monoubiquitination and activation of CPEB3. Interacts with CAPN2; this leads to cleavage of CPEB3. Interacts (via C-terminal RNA-binding region) with TOB1; TOB1 also binds CNOT7/CAF1 and recruits it to CPEB3 to form a ternary complex. Interacts with SUMO-conjugating enzyme UBC9. Interacts with IPO5; the interaction is enhanced in a RAN-regulated manner following neuronal stimulation and mediates CPEB3 nuclear import. Interacts with exportin XPO1/CRM1. Post-translationally, activated by NEURL1-mediated monoubiquitination, resulting in the growth of new dendritic spines and increased levels of GRIA1 and GRIA2. NEURL1-mediated monoubiquitination facilitates synaptic plasticity and hippocampal-dependent memory storage. In terms of processing, under basal unstimulated conditions when CPEB3 is mainly unaggregated, sumoylated and acts as a translational repressor. Following neuronal stimulation, becomes desumoylated and aggregated which is required for the translation of mRNA targets and for dendritic filopodia formation. Following neuronal stimulation, cleaved by CAPN2 which abolishes its translational repressor activity, leading to translation of CPEB3 target mRNAs. Post-translationally, phosphorylation is enhanced by neuronal stimulation. In terms of tissue distribution, highly expressed in brain (at protein level). In brain, expressed in the hippocampus, granule cells and interneurons of the cerebellum, and mitral cells of the olfactory bulb (at protein level). Detected in the spinal cord and in peripheral dorsal root ganglia (at protein level). In the retina, strongly expressed in the retinal ganglion layer and, to a lesser extent, in the inner margin of the inner nuclear layer with expression also detected in the inner and outer plexiform layers (at protein level). Highly expressed in brain and heart, less in liver, kidney, embryo, skeletal muscle, lung and ovary. Weakly expressed in granular cells of dentate gyrus and the pyramidal cells of CA3 and CA1 of the hippocampus.

Its subcellular location is the cytoplasm. It localises to the nucleus. It is found in the synapse. The protein localises to the cell projection. The protein resides in the dendrite. Its subcellular location is the postsynaptic density. Functionally, sequence-specific RNA-binding protein which acts as a translational repressor in the basal unstimulated state but, following neuronal stimulation, acts as a translational activator. In contrast to CPEB1, does not bind to the cytoplasmic polyadenylation element (CPE), a uridine-rich sequence element within the mRNA 3'-UTR, but binds to a U-rich loop within a stem-loop structure. Required for the consolidation and maintenance of hippocampal-based long term memory. In the basal state, binds to the mRNA 3'-UTR of the glutamate receptors GRIA1 and GRIA2 and negatively regulates their translation. Also represses the translation of DLG4, GRIN1 GRIN2A and GRIN2B. When activated, acts as a translational activator of GRIA1 and GRIA2. In the basal state, suppresses SUMO2 translation but activates it following neuronal stimulation. Binds to the 3'-UTR of TRPV1 mRNA and represses TRPV1 translation which is required to maintain normal thermoception. Binds actin mRNA, leading to actin translational repression in the basal state and to translational activation following neuronal stimulation. Negatively regulates target mRNA levels by binding to TOB1 which recruits CNOT7/CAF1 to a ternary complex and this leads to target mRNA deadenylation and decay. In addition to its role in translation, binds to and inhibits the transcriptional activation activity of STAT5B without affecting its dimerization or DNA-binding activity. This, in turn, represses transcription of the STAT5B target gene EGFR which has been shown to play a role in enhancing learning and memory performance. In contrast to CPEB1, CPEB2 and CPEB4, not required for cell cycle progression. The sequence is that of Cytoplasmic polyadenylation element-binding protein 3 (Cpeb3) from Mus musculus (Mouse).